The primary structure comprises 193 residues: UPF0301 protein SCO2948 (193 aa).

The protein belongs to the UPF0301 (AlgH) family.

The polypeptide is UPF0301 protein SCO2948 (Streptomyces coelicolor (strain ATCC BAA-471 / A3(2) / M145)).